Reading from the N-terminus, the 435-residue chain is Methylenetetrahydrofolate--tRNA-(uracil-5-)-methyltransferase TrmFO (435 aa).

Residue 7–12 (GAGLAG) coordinates FAD.

Belongs to the MnmG family. TrmFO subfamily. It depends on FAD as a cofactor.

It is found in the cytoplasm. It carries out the reaction uridine(54) in tRNA + (6R)-5,10-methylene-5,6,7,8-tetrahydrofolate + NADH + H(+) = 5-methyluridine(54) in tRNA + (6S)-5,6,7,8-tetrahydrofolate + NAD(+). The enzyme catalyses uridine(54) in tRNA + (6R)-5,10-methylene-5,6,7,8-tetrahydrofolate + NADPH + H(+) = 5-methyluridine(54) in tRNA + (6S)-5,6,7,8-tetrahydrofolate + NADP(+). Catalyzes the folate-dependent formation of 5-methyl-uridine at position 54 (M-5-U54) in all tRNAs. The protein is Methylenetetrahydrofolate--tRNA-(uracil-5-)-methyltransferase TrmFO of Thermotoga sp. (strain RQ2).